The following is a 293-amino-acid chain: Elongation factor Ts (293 aa).

Positions 81 to 84 are involved in Mg(2+) ion dislocation from EF-Tu; that stretch reads TDFV.

This sequence belongs to the EF-Ts family.

The protein resides in the cytoplasm. Functionally, associates with the EF-Tu.GDP complex and induces the exchange of GDP to GTP. It remains bound to the aminoacyl-tRNA.EF-Tu.GTP complex up to the GTP hydrolysis stage on the ribosome. This Teredinibacter turnerae (strain ATCC 39867 / T7901) protein is Elongation factor Ts.